A 316-amino-acid chain; its full sequence is Protein lifeguard 2 (316 aa).

Residues 1–46 (MTQGKLSVANKAPGTEGQQQANGEKKETPAVPSAPPSYEEATSGEG) are disordered. Helical transmembrane passes span 106 to 126 (VYTI…LFTF), 138 to 158 (PGWY…LACC), and 165 to 185 (FPWN…LTGM). N191 carries an N-linked (GlcNAc...) asparagine glycan. The next 4 helical transmembrane spans lie at 194 to 214 (SVLL…VFSF), 225 to 245 (GVLF…AILL), 251 to 271 (PWLH…FLAF), and 290 to 310 (IFGA…FLQL).

Belongs to the BI1 family. LFG subfamily. As to quaternary structure, interacts with FAS/TNFRSF6 and BAX.

The protein localises to the cell membrane. It is found in the membrane raft. The protein resides in the postsynaptic cell membrane. Antiapoptotic protein which protects cells uniquely from Fas-induced apoptosis. Regulates Fas-mediated apoptosis in neurons by interfering with caspase-8 activation. Plays a role in cerebellar development by affecting cerebellar size, internal granular layer (IGL) thickness, and Purkinje cell (PC) development. The chain is Protein lifeguard 2 (FAIM2) from Bos taurus (Bovine).